We begin with the raw amino-acid sequence, 66 residues long: Cold shock-like protein CspD (66 aa).

The CSD domain maps to 4-63 (GKVKWFNGEKGFGFIEVEGGEDVFVHFSAIQGDGFKTLEEGQEVSFEIVDGNRGPQAANV).

In terms of assembly, homodimer.

Its subcellular location is the cytoplasm. This Bacillus cereus protein is Cold shock-like protein CspD (cspD).